We begin with the raw amino-acid sequence, 720 residues long: MDKSPTKTSIRTKFARHQPISDVDTTEQSSSCIKKDDRGLSSFGVQSSVFSRRSCRMSELEAKPTIISEDQRIAVRSEIGGSFSGFDDKVDNVFHSNNNLHGSPSTTELECPGIMNPRFLVGRSLNSRSRAVTRGSKRTSNVKENEGSIHRSDDQVSTENCSAKDEERDRDSGGVSSYGNKRSDEFCGTSPILEAKGFGISNTCFNCKKYGHRATECSAPQRECANCGDPNHRANECASWSKNGVQEPTKVTYVPVVDKMEEVFSMLKINAGDFFDKFFDASVQLVSRGQPVTIQPCKSFSDSDIPQSMRRNVERAGYTRTTPIQQYTLPLVADGKDILACAQTGSGKTAAFLLPIMSRLILEKDLNYGAEGGCYPRCIILTPTRELADQIYNEGRKFSYQSVMEIKPVYGGINVGYNKSQIMKGCTIIVGTIGRVKHFCEDGAIKLDKCRYLVLDEADRMIDSMGFGPEIEQIINYKNMPKNDKRQTMMFSATFPSSVQEAARKLLREDYTMITIDKIGAANKCVIQEFELCDRTSKVDKLLKLLGIDIDTYTTEKNSDVFVKKTIVFVAQQKMADTLASIMSAAQVPAITIHGAREQKERSAALKLFRSGAKPVLIATAVVERGLDIKGVDHVINYDMPNNIDDYIHRIGRTGRVGNSGRATSFISLADDVQILPQLVRTLADAEQVVPSWMKEAAGGTSNPNKFEKSIDTEEPEEAW.

Polar residues predominate over residues Met-1–Arg-11. 2 disordered regions span residues Met-1 to Lys-34 and Leu-125 to Asn-180. 2 stretches are compositionally biased toward basic and acidic residues: residues Asn-141 to Asp-154 and Ser-162 to Ser-172. 2 consecutive CCHC-type zinc fingers follow at residues Asn-202–Ala-219 and Arg-222–Ser-239. Residues Lys-298–Gln-326 carry the Q motif motif. One can recognise a Helicase ATP-binding domain in the interval Leu-329–Met-513. An ATP-binding site is contributed by Ala-342–Thr-349. The short motif at Asp-456–Asp-459 is the DEAD box element. Residues Asp-549–Ala-698 enclose the Helicase C-terminal domain. Residues Glu-696 to Trp-720 form a disordered region.

It belongs to the DEAD box helicase family. DDX4/VASA subfamily. As to quaternary structure, interacts with csn-5. Interacts (via C-terminus) with kgb-1. Interacts with zyx-1.

The protein resides in the cytoplasm. The catalysed reaction is ATP + H2O = ADP + phosphate + H(+). Probable ATP-binding RNA helicase. In Caenorhabditis elegans, this protein is ATP-dependent RNA helicase glh-3.